The following is a 98-amino-acid chain: Aspartyl/glutamyl-tRNA(Asn/Gln) amidotransferase subunit C (98 aa).

It belongs to the GatC family. In terms of assembly, heterotrimer of A, B and C subunits.

It catalyses the reaction L-glutamyl-tRNA(Gln) + L-glutamine + ATP + H2O = L-glutaminyl-tRNA(Gln) + L-glutamate + ADP + phosphate + H(+). It carries out the reaction L-aspartyl-tRNA(Asn) + L-glutamine + ATP + H2O = L-asparaginyl-tRNA(Asn) + L-glutamate + ADP + phosphate + 2 H(+). Its function is as follows. Allows the formation of correctly charged Asn-tRNA(Asn) or Gln-tRNA(Gln) through the transamidation of misacylated Asp-tRNA(Asn) or Glu-tRNA(Gln) in organisms which lack either or both of asparaginyl-tRNA or glutaminyl-tRNA synthetases. The reaction takes place in the presence of glutamine and ATP through an activated phospho-Asp-tRNA(Asn) or phospho-Glu-tRNA(Gln). This is Aspartyl/glutamyl-tRNA(Asn/Gln) amidotransferase subunit C from Bifidobacterium adolescentis (strain ATCC 15703 / DSM 20083 / NCTC 11814 / E194a).